The primary structure comprises 80 residues: Putative defensin-like protein 15 (80 aa).

Positions methionine 1–alanine 29 are cleaved as a signal peptide. Glutamine 30 is modified (pyrrolidone carboxylic acid). 4 disulfides stabilise this stretch: cysteine 33-cysteine 80, cysteine 44-cysteine 65, cysteine 50-cysteine 74, and cysteine 54-cysteine 76.

The protein belongs to the DEFL family.

It localises to the secreted. In terms of biological role, confers broad-spectrum resistance to pathogens. The protein is Putative defensin-like protein 15 (PDF1.2B) of Arabidopsis thaliana (Mouse-ear cress).